The following is a 651-amino-acid chain: Probable replication restart protein PriA (651 aa).

Zn(2+) contacts are provided by Cys-371, Cys-374, Cys-380, Cys-383, Cys-399, Cys-402, Cys-411, and Cys-414.

It belongs to the helicase family. PriA subfamily. In terms of assembly, component of the replication restart primosome. Zn(2+) is required as a cofactor.

Functionally, initiates the restart of stalled replication forks, which reloads the replicative helicase on sites other than the origin of replication. Recognizes and binds to abandoned replication forks and remodels them to uncover a helicase loading site. Promotes assembly of the primosome at these replication forks. This is Probable replication restart protein PriA from Mycobacterium leprae (strain TN).